The sequence spans 41 residues: Large ribosomal subunit protein bL36 (41 aa).

Belongs to the bacterial ribosomal protein bL36 family.

The sequence is that of Large ribosomal subunit protein bL36 from Sinorhizobium medicae (strain WSM419) (Ensifer medicae).